We begin with the raw amino-acid sequence, 1002 residues long: Ephrin type-B receptor 5 (1002 aa).

The first 29 residues, 1-29 (MDSNADISARRVSGMDWLWLVCFFHLVTS), serve as a signal peptide directing secretion. Topologically, residues 30–564 (LEEILLDTTG…AQDRLPLIVG (535 aa)) are extracellular. The Eph LBD domain maps to 31 to 213 (EEILLDTTGE…FFYKCPAVVK (183 aa)). 2 Fibronectin type-III domains span residues 344–452 (APRD…TSQS) and 453–548 (VPSA…TLMA). A glycan (N-linked (GlcNAc...) asparagine) is linked at asparagine 446. Residues 565–585 (SALGGLAFLVIAAIAILAIIF) traverse the membrane as a helical segment. Over 586 to 1002 (KSKRRETPYT…HLNQLEPVEV (417 aa)) the chain is Cytoplasmic. One can recognise a Protein kinase domain in the interval 637–900 (IKIEEVIGSG…QIVSALDKMI (264 aa)). Residues 643–651 (IGSGEFGEV) and lysine 669 contribute to the ATP site. Aspartate 762 serves as the catalytic Proton acceptor. The tract at residues 906-928 (LKATGTGSSRPSQPLLSNSPPDF) is disordered. Residues 910–928 (GTGSSRPSQPLLSNSPPDF) are compositionally biased toward polar residues. The SAM domain maps to 929 to 993 (PSLSNAHEWL…LNSIQLMKVH (65 aa)). The PDZ-binding motif lies at 1000–1002 (VEV).

Belongs to the protein kinase superfamily. Tyr protein kinase family. Ephrin receptor subfamily. Most abundant in thymus and detectable in brain, retina, kidney, lung and heart. Not detected in skeletal muscle and liver.

Its subcellular location is the membrane. It carries out the reaction L-tyrosyl-[protein] + ATP = O-phospho-L-tyrosyl-[protein] + ADP + H(+). In terms of biological role, receptor for members of the ephrin-B family. The sequence is that of Ephrin type-B receptor 5 (EPHB5) from Gallus gallus (Chicken).